A 164-amino-acid polypeptide reads, in one-letter code: CB1 cannabinoid receptor-interacting protein 1 (164 aa).

The protein belongs to the CNRIP family. Interacts with the cannabinoid receptor CNR1 (via C-terminus). Does not interact with cannabinoid receptor CNR2.

Its function is as follows. Suppresses cannabinoid receptor CNR1-mediated tonic inhibition of voltage-gated calcium channels. This Rattus norvegicus (Rat) protein is CB1 cannabinoid receptor-interacting protein 1 (Cnrip1).